Here is a 120-residue protein sequence, read N- to C-terminus: Protein p14.5 (120 aa).

Disordered stretches follow at residues 1 to 27 (MADFNSPIQYLKEDSRDRTSIGSLEYD) and 80 to 120 (REFT…HKSK). An N-acetylalanine; by host modification is found at A2. The segment covering 103–120 (KPKKKKHLFPKLSSHKSK) has biased composition (basic residues).

This sequence belongs to the asfivirus structural protein p14.5 family. In terms of assembly, interacts with the major capsid protein. Interacts with host IRF3; this interaction interferes with the recruitment of IRF3 to TBK1. Acetylated.

The protein resides in the virion. Its function is as follows. Structural protein required for transport of intracellular particles from the assembly sites to the plasma membrane. Binds to both ssDNA and dsDNA. Suppressed the activation of the cGAS/STING pathway by interfering with the recruitment of IRF3 to TBK1, which in turn suppresses IRF3 phosphorylation, decreasing interferon production. The polypeptide is Protein p14.5 (Ornithodoros (relapsing fever ticks)).